We begin with the raw amino-acid sequence, 362 residues long: Zinc transporter 9 (362 aa).

The signal sequence occupies residues 1-21 (MAFDLKLTACLLLAVFSLAAA). Over 22-42 (ADCECQPSDEGHDAAKSRTLK) the chain is Extracellular. Residues 43–63 (VIAIFCILVGSSAGCAIPSLG) traverse the membrane as a helical segment. Over 64–74 (RRFPALRPDTS) the chain is Cytoplasmic. A helical transmembrane segment spans residues 75–95 (LFFALKAFAAGVILATAFVHI). The Extracellular segment spans residues 96–120 (LPVSFDKLGSPCLVDGPWRKYPFTG). Residues 121–141 (LVAMLAAVATLLLDTIATGYF) traverse the membrane as a helical segment. Over 142 to 207 (LQRAQDSRGA…EDRAKLVRHR (66 aa)) the chain is Cytoplasmic. Residues 208–228 (VISQVFELGIIVHSIIIGISL) form a helical membrane-spanning segment. Residues 229-239 (GASESPSTIRP) lie on the Extracellular side of the membrane. A helical transmembrane segment spans residues 240-260 (LVAALTFHQFFEGIGLGGCIV). The Cytoplasmic segment spans residues 261–269 (QARFHLKSA). Residues 270-290 (VTMAIFFSLTTPVGIMIGIGI) traverse the membrane as a helical segment. Residues 291-301 (SSAYNENSPTA) are Extracellular-facing. The helical transmembrane segment at 302–322 (LIVEGILDAAAAGILNYMALV) threads the bilayer. At 323–341 (DLLAEDFMNPRVRKSGRLQ) the chain is on the cytoplasmic side. The chain crosses the membrane as a helical span at residues 342 to 362 (LIISILLLVGIALMSLLGIWA).

This sequence belongs to the ZIP transporter (TC 2.A.5) family.

It localises to the cell membrane. Its function is as follows. Zinc transporter that may be involved in zinc uptake from the rhizosphere. This is Zinc transporter 9 (ZIP9) from Oryza sativa subsp. japonica (Rice).